A 274-amino-acid polypeptide reads, in one-letter code: Large ribosomal subunit protein uL2 (274 aa).

The segment at V223–K274 is disordered.

The protein belongs to the universal ribosomal protein uL2 family. As to quaternary structure, part of the 50S ribosomal subunit. Forms a bridge to the 30S subunit in the 70S ribosome.

Functionally, one of the primary rRNA binding proteins. Required for association of the 30S and 50S subunits to form the 70S ribosome, for tRNA binding and peptide bond formation. It has been suggested to have peptidyltransferase activity; this is somewhat controversial. Makes several contacts with the 16S rRNA in the 70S ribosome. The polypeptide is Large ribosomal subunit protein uL2 (Shewanella putrefaciens (strain CN-32 / ATCC BAA-453)).